The sequence spans 345 residues: S-adenosylmethionine:tRNA ribosyltransferase-isomerase (345 aa).

The protein belongs to the QueA family. Monomer.

It is found in the cytoplasm. The catalysed reaction is 7-aminomethyl-7-carbaguanosine(34) in tRNA + S-adenosyl-L-methionine = epoxyqueuosine(34) in tRNA + adenine + L-methionine + 2 H(+). It functions in the pathway tRNA modification; tRNA-queuosine biosynthesis. In terms of biological role, transfers and isomerizes the ribose moiety from AdoMet to the 7-aminomethyl group of 7-deazaguanine (preQ1-tRNA) to give epoxyqueuosine (oQ-tRNA). This Helicobacter pylori (strain Shi470) protein is S-adenosylmethionine:tRNA ribosyltransferase-isomerase.